The primary structure comprises 444 residues: Aflatoxin biosynthesis regulatory protein (444 aa).

Residues 1–26 (MVDHISPRASPGPIRSSQTRRARKLR) form a disordered region. Residues 29 to 56 (CTSCASSKVRCTKEKPACARCIERGLAC) constitute a DNA-binding region (zn(2)-C6 fungal-type). The interval 64 to 167 (MGRNPRAPSP…QGLGGDLAGQ (104 aa)) is disordered. Over residues 106–116 (TQAHTHAHSHP) the composition is skewed to basic residues. Positions 120–130 (PQSHPQSNQPP) are enriched in low complexity. The segment covering 136 to 149 (PNGSSSVSAIFSHQ) has biased composition (polar residues).

In terms of assembly, interacts with its co-regulator aflS.

The protein resides in the nucleus. Its subcellular location is the endosome. In terms of biological role, transcription factor involved in regulation of the aflatoxin biosynthesis gene cluster. Binds with its co-regulator aflS to AFLR1 elements (5'-TCGSWNNSCGR-3') present in the promoters of the aflatoxin cluster genes. The ratio of the expression data between aflS:aflR plays a crucial role in the regulation of aflatoxins production. A high ratio, produced at a range between 17 and 30 degrees Celsius, corresponds with the production profile of aflatoxin G1 biosynthesis. A low ratio, produced over 30 degrees Celsius, is related to aflatoxin B1 biosynthesis. This chain is Aflatoxin biosynthesis regulatory protein, found in Aspergillus parasiticus (strain ATCC 56775 / NRRL 5862 / SRRC 143 / SU-1).